Consider the following 402-residue polypeptide: MMVALRGASALLVLFLAAFLPPPQCTQDPAMVHYIYQRFRVLEQGLEKCTQATRAYIQEFQEFSKNISVMLGRCQTYTSEYKSAVGNLALRVERAQREIDYIQYLREADECIESEDKTLAEMLLQEAEEEKKIRTLLNASCDNMLMGIKSLKIVKKMMDTHGSWMKDAVYNSPKVYLLIGSRNNTVWEFANIRAFMEDNTKPAPRKQILTLSWQGTGQVIYKGFLFFHNQATSNEIIKYNLQKRTVEDRMLLPGGVGRALVYQHSPSTYIDLAVDEHGLWAIHSGPGTHSHLVLTKIEPGTLGVEHSWDTPCRSQDAEASFLLCGVLYVVYSTGGQGPHRITCIYDPLGTISEEDLPNLFFPKRPRSHSMIHYNPRDKQLYAWNEGNQIIYKLQTKRKLPLK.

A signal peptide spans 1-28 (MMVALRGASALLVLFLAAFLPPPQCTQD). N-linked (GlcNAc...) asparagine glycosylation is present at asparagine 66. The stretch at 79–133 (SEYKSAVGNLALRVERAQREIDYIQYLREADECIESEDKTLAEMLLQEAEEEKKI) forms a coiled coil. Residues asparagine 138 and asparagine 183 are each glycosylated (N-linked (GlcNAc...) asparagine). In terms of domain architecture, Olfactomedin-like spans 140-397 (SCDNMLMGIK…QIIYKLQTKR (258 aa)). Cysteine 141 and cysteine 324 are disulfide-bonded.

Post-translationally, highly N-glycosylated. Mainly expressed in the small intestine, liver, lung and heart.

It is found in the secreted. This chain is Olfactomedin-like protein 1 (OLFML1), found in Homo sapiens (Human).